Here is a 336-residue protein sequence, read N- to C-terminus: DNA repair protein XRCC4 (336 aa).

Residues 1–213 are interaction with IFFO1; that stretch reads MERKISRIHL…EREKDIKQEG (213 aa). S53 carries the phosphoserine; by PRKDC modification. 2 coiled-coil regions span residues 131–165 and 184–212; these read LDTI…FEKC and LNEK…IKQE. An interaction with LIG4 region spans residues 180–213; sequence FILVLNEKKTKIRSLHNKLLNAAQEREKDIKQEG. Phosphoserine; by PRKDC is present on S193. A Glycyl lysine isopeptide (Lys-Gly) (interchain with G-Cter in SUMO) cross-link involves residue K210. Residues 212-249 form a disordered region; it reads EGETAICSEMTADRDPVYDESTDEESENQTDLSGLASA. The residue at position 229 (Y229) is a Phosphotyrosine. Acidic residues predominate over residues 229-239; sequence YDESTDEESEN. A Phosphoserine modification is found at S232. T233 is modified (phosphothreonine; by CK2). Phosphoserine is present on residues S237 and S256. S260 is modified (phosphoserine; by PRKDC). The disordered stretch occupies residues 264–336; it reads TDIAPSRKRR…SSPEDLFDEI (73 aa). The Nuclear localization signal motif lies at 270-275; sequence RKRRQR. Residue K296 forms a Glycyl lysine isopeptide (Lys-Gly) (interchain with G-Cter in ubiquitin) linkage. S303, S304, S315, and S320 each carry phosphoserine; by PRKDC. The segment covering 317–329 has biased composition (polar residues); that stretch reads ENMSLETLRNSSP. T323 carries the phosphothreonine; by PRKDC modification. Phosphoserine; by PRKDC occurs at positions 327 and 328.

Belongs to the XRCC4-XLF family. XRCC4 subfamily. As to quaternary structure, homodimer and homotetramer in solution. Interacts with NHEJ1/XLF; the interaction is direct and is mediated via a head-to-head interaction between N-terminal head regions. Interacts with LIG4; the LIG4-XRCC4 subcomplex has a 1:2 stoichiometry and XRCC4 is required for LIG4 stability. Component of the core long-range non-homologous end joining (NHEJ) complex (also named DNA-PK complex) composed of PRKDC, LIG4, XRCC4, XRCC6/Ku70, XRCC5/Ku86 and NHEJ1/XLF. Additional component of the NHEJ complex includes PAXX. Following autophosphorylation, PRKDC dissociates from DNA, leading to formation of the short-range NHEJ complex, composed of LIG4, XRCC4, XRCC6/Ku70, XRCC5/Ku86 and NHEJ1/XLF. Interacts with PRKDC; the interaction is direct. Interacts with XRCC6/Ku70; the interaction is direct. Interacts with APTX and APLF. Forms a heterotetramer with IFFO1; the interaction involves LIG4-free XRCC4 and leads to the relocalization of IFFO1 to the sites of DNA damage. Interacts with PNKP; mainly interacts with PNKP when phosphorylated at Thr-233, but is also able to interact at much lower level with PNKP when not unphosphorylated. Interacts with POLL (DNA polymerase lambda). In terms of assembly, interacts with XKR4; interacts with the processed form of XKR4, which is cleaved by caspase. Phosphorylated by PRKDC at the C-terminus in response to DNA damage; Ser-260 and Ser-320 constitute the main phosphorylation sites. Phosphorylations by PRKDC at the C-terminus of XRCC4 and NHEJ1/XLF are highly redundant and regulate ability of the XRCC4-NHEJ1/XLF subcomplex to bridge DNA. Phosphorylation by PRKDC does not prevent interaction with NHEJ1/XLF but disrupts ability to bridge DNA and promotes detachment from DNA. Phosphorylation at Ser-327 and Ser-328 by PRKDC promotes recognition by the SCF(FBXW7) complex and subsequent ubiquitination via 'Lys-63'-linked ubiquitin. Phosphorylation at Thr-233 by CK2 promotes interaction with PNKP; regulating PNKP activity and localization to DNA damage sites. Phosphorylation by CK2 promotes interaction with APTX. Post-translationally, ubiquitinated at Lys-296 by the SCF(FBXW7) complex via 'Lys-63'-linked ubiquitination, thereby promoting double-strand break repair: the SCF(FBXW7) complex specifically recognizes XRCC4 when phosphorylated at Ser-327 and Ser-328 by PRKDC, and 'Lys-63'-linked ubiquitination facilitates DNA non-homologous end joining (NHEJ) by enhancing association with XRCC5/Ku80 and XRCC6/Ku70. Monoubiquitinated. In terms of processing, undergoes proteolytic processing by caspase-3 (CASP3). This generates the protein XRCC4, C-terminus (XRCC4/C), which translocates to the cytoplasm and activates phospholipid scramblase activity of XKR4, thereby promoting phosphatidylserine exposure on apoptotic cell surface. Widely expressed.

Its subcellular location is the nucleus. It is found in the chromosome. It localises to the cytoplasm. Functionally, DNA non-homologous end joining (NHEJ) core factor, required for double-strand break repair and V(D)J recombination. Acts as a scaffold protein that regulates recruitment of other proteins to DNA double-strand breaks (DSBs). Associates with NHEJ1/XLF to form alternating helical filaments that bridge DNA and act like a bandage, holding together the broken DNA until it is repaired. The XRCC4-NHEJ1/XLF subcomplex binds to the DNA fragments of a DSB in a highly diffusive manner and robustly bridges two independent DNA molecules, holding the broken DNA fragments in close proximity to one other. The mobility of the bridges ensures that the ends remain accessible for further processing by other repair factors. Plays a key role in the NHEJ ligation step of the broken DNA during DSB repair via direct interaction with DNA ligase IV (LIG4): the LIG4-XRCC4 subcomplex reseals the DNA breaks after the gap filling is completed. XRCC4 stabilizes LIG4, regulates its subcellular localization and enhances LIG4's joining activity. Binding of the LIG4-XRCC4 subcomplex to DNA ends is dependent on the assembly of the DNA-dependent protein kinase complex DNA-PK to these DNA ends. Promotes displacement of PNKP from processed strand break termini. Its function is as follows. Acts as an activator of the phospholipid scramblase activity of XKR4. This form, which is generated upon caspase-3 (CASP3) cleavage, translocates into the cytoplasm and interacts with XKR4, thereby promoting phosphatidylserine scramblase activity of XKR4 and leading to phosphatidylserine exposure on apoptotic cell surface. The sequence is that of DNA repair protein XRCC4 from Homo sapiens (Human).